We begin with the raw amino-acid sequence, 578 residues long: A-type ATP synthase subunit A (578 aa).

228-235 is a binding site for ATP; it reads GPFGSGKT.

It belongs to the ATPase alpha/beta chains family. Has multiple subunits with at least A(3), B(3), C, D, E, F, H, I and proteolipid K(x).

Its subcellular location is the cell membrane. It catalyses the reaction ATP + H2O + 4 H(+)(in) = ADP + phosphate + 5 H(+)(out). In terms of biological role, produces ATP from ADP in the presence of a proton gradient across the membrane. The archaeal alpha chain is a catalytic subunit. Functionally, component of the A-type ATP synthase that produces ATP from ADP in the presence of a proton gradient across the membrane. The A chain is the catalytic subunit. In Methanosarcina barkeri, this protein is A-type ATP synthase subunit A.